Reading from the N-terminus, the 347-residue chain is Dolichyl-diphosphooligosaccharide--protein glycosyltransferase subunit TUSC3 (347 aa).

A signal peptide spans 1 to 41; sequence MSARAAPSRRRQAGRRLRYLPTGSFPFLLLLLLLCIQLGGG. Residues 42–196 lie on the Lumenal side of the membrane; it reads QKKKENLLAE…DVHIRVFRPP (155 aa). In terms of domain architecture, Thioredoxin spans 59 to 187; that stretch reads WSSRRSIFRM…LAKWIADRTD (129 aa). N-linked (GlcNAc...) asparagine glycosylation is present at Asn-83. The cysteines at positions 99 and 102 are disulfide-linked. The helical transmembrane segment at 197–217 threads the bilayer; it reads NYSGTIALALLVSLVGGLLYL. Residues 218–221 are Cytoplasmic-facing; the sequence is RRNN. Residues 222 to 242 traverse the membrane as a helical segment; that stretch reads LEFIYNKTGWAMVSLCIVFAM. Residues 243-276 lie on the Lumenal side of the membrane; it reads TSGQMWNHIRGPPYAHKNPHNGQVSYIHGSSQAQ. A helical membrane pass occupies residues 277 to 297; it reads FVAESHIILVLNAAITMGMVL. Topologically, residues 298–312 are cytoplasmic; it reads LNEAATSKGDVGKRR. Residues 313-333 form a helical membrane-spanning segment; the sequence is IICLVGLGLVVFFFSFLLSIF. The Lumenal portion of the chain corresponds to 334-347; it reads RSKYHGYPYSFLIK.

It belongs to the OST3/OST6 family. In terms of assembly, accessory component of the STT3B-containing form of the oligosaccharyltransferase (OST) complex. OST exists in two different complex forms which contain common core subunits RPN1, RPN2, OST48, OST4, DAD1 and TMEM258, either STT3A or STT3B as catalytic subunits, and form-specific accessory subunits. OST can form stable complexes with the Sec61 complex or with both the Sec61 and TRAP complexes. The association of TUSC3 or MAGT1 with the STT3B-containing complex seems to be mutually exclusvice.

It localises to the endoplasmic reticulum membrane. It functions in the pathway protein modification; protein glycosylation. Functionally, acts as accessory component of the N-oligosaccharyl transferase (OST) complex which catalyzes the transfer of a high mannose oligosaccharide from a lipid-linked oligosaccharide donor to an asparagine residue within an Asn-X-Ser/Thr consensus motif in nascent polypeptide chains. Involved in N-glycosylation of STT3B-dependent substrates. Specifically required for the glycosylation of a subset of acceptor sites that are near cysteine residues; in this function seems to act redundantly with MAGT1. In its oxidized form proposed to form transient mixed disulfides with a glycoprotein substrate to facilitate access of STT3B to the unmodified acceptor site. Also has oxidoreductase-independent functions in the STT3B-containing OST complex possibly involving substrate recognition. Could indirectly play a role in Mg(2+) transport. The chain is Dolichyl-diphosphooligosaccharide--protein glycosyltransferase subunit TUSC3 (Tusc3) from Mus musculus (Mouse).